Here is a 213-residue protein sequence, read N- to C-terminus: E3 ubiquitin-protein ligase NleG8 (213 aa).

Positions 136-189 are RING/U-box domain; that stretch reads CPITLCVPETGVFVKNARCSKVCSLYDISALTEMLRRNASHPLSREAFTPGMIV. Positions 211–213 match the PDZ-binding motif motif; it reads TRL.

It belongs to the NleG E3 ligase family. Interacts with host GOPC (human protein).

The protein localises to the secreted. It is found in the host cytoplasm. The catalysed reaction is S-ubiquitinyl-[E2 ubiquitin-conjugating enzyme]-L-cysteine + [acceptor protein]-L-lysine = [E2 ubiquitin-conjugating enzyme]-L-cysteine + N(6)-ubiquitinyl-[acceptor protein]-L-lysine.. Functionally, effector proteins function to alter host cell physiology and promote bacterial survival in host tissues. This protein is an E3 ubiquitin-protein ligase that probably interferes with the host's ubiquitination pathway and targets host proteins for proteasomal degradation. Mice infected with a strain of bacteria deleted for this gene had an increased survival rate. Can be ubiquitinylated, and ubiquitinate ubiquitin, giving rise to polyubiquitin chains (in vitro). The protein is E3 ubiquitin-protein ligase NleG8 of Citrobacter rodentium.